Reading from the N-terminus, the 357-residue chain is MRLEVEARLRLGSFAIDAAFGSEGGVTALFGRSGSGKTSLVNIIAGLLRPDQGRVVLDGDTIADSERRLFTPVHRRRFAYVFQEARLFPHLSVRGNLAYGRWFAGAARSGPEFGRIVEMLGIGHLLDRMPSKLSGGERQRVAIGRALLAFPRLLLMDEPLAALDDARKAEILPYLERLRDETRIPIVYVSHSVAEVARLAERVVVMENGRVKASGKTAAVLNEPFPTSGPGRREAGALIEGIVDSHDEGHELTVVRAGDCLIRVPHLVAEPGQRLRLYIAARDVMLATRRPEGISALNVLPGTIVGLSSPRQGSIDVRVDCGGNVIAARVTTLSRDALDLRPGKQVHAVVKTVALDY.

An ABC transporter domain is found at 1 to 233 (MRLEVEARLR…PFPTSGPGRR (233 aa)). 31–38 (GRSGSGKT) is an ATP binding site. In terms of domain architecture, Mop spans 293-357 (GISALNVLPG…AVVKTVALDY (65 aa)).

Belongs to the ABC transporter superfamily. Molybdate importer (TC 3.A.1.8) family. As to quaternary structure, the complex is composed of two ATP-binding proteins (ModC), two transmembrane proteins (ModB) and a solute-binding protein (ModA).

The protein resides in the cell inner membrane. The catalysed reaction is molybdate(out) + ATP + H2O = molybdate(in) + ADP + phosphate + H(+). Part of the ABC transporter complex ModABC involved in molybdenum import. Responsible for energy coupling to the transport system. The chain is Molybdenum import ATP-binding protein ModC from Rhizobium meliloti (strain 1021) (Ensifer meliloti).